The chain runs to 201 residues: NADH-quinone oxidoreductase subunit C (201 aa).

The protein belongs to the complex I 30 kDa subunit family. In terms of assembly, NDH-1 is composed of 14 different subunits. Subunits NuoB, C, D, E, F, and G constitute the peripheral sector of the complex.

The protein localises to the cell inner membrane. The catalysed reaction is a quinone + NADH + 5 H(+)(in) = a quinol + NAD(+) + 4 H(+)(out). Its function is as follows. NDH-1 shuttles electrons from NADH, via FMN and iron-sulfur (Fe-S) centers, to quinones in the respiratory chain. The immediate electron acceptor for the enzyme in this species is believed to be ubiquinone. Couples the redox reaction to proton translocation (for every two electrons transferred, four hydrogen ions are translocated across the cytoplasmic membrane), and thus conserves the redox energy in a proton gradient. The protein is NADH-quinone oxidoreductase subunit C of Azoarcus sp. (strain BH72).